The chain runs to 78 residues: Defensin beta 136 (78 aa).

Residues 1–21 (MNLCLSSLLFFLVILLPSGKG) form the signal peptide. 3 cysteine pairs are disulfide-bonded: cysteine 33–cysteine 60, cysteine 40–cysteine 54, and cysteine 44–cysteine 61.

This sequence belongs to the beta-defensin family.

It localises to the secreted. Its function is as follows. Host defense peptide that exhibits antimicrobial and antifungal activity. Exhibits antimicrobial activity against E.coli, S.aureus and C.albicans (in vitro). Has high lipopolysaccharide (LPS)-binding affinity, and may thereby be involved in immunoregulation through LPS neutralization. In Pan troglodytes (Chimpanzee), this protein is Defensin beta 136 (DEFB136).